We begin with the raw amino-acid sequence, 156 residues long: Protein-export protein SecB (156 aa).

It belongs to the SecB family. As to quaternary structure, homotetramer, a dimer of dimers. One homotetramer interacts with 1 SecA dimer.

The protein localises to the cytoplasm. In terms of biological role, one of the proteins required for the normal export of preproteins out of the cell cytoplasm. It is a molecular chaperone that binds to a subset of precursor proteins, maintaining them in a translocation-competent state. It also specifically binds to its receptor SecA. The chain is Protein-export protein SecB from Xanthobacter autotrophicus (strain ATCC BAA-1158 / Py2).